A 197-amino-acid polypeptide reads, in one-letter code: Probable GTP-binding protein EngB (197 aa).

Residues 22-195 (ALPELALVGR…WQWIEERTGV (174 aa)) form the EngB-type G domain. GTP is bound by residues 30 to 37 (GRSNVGKS), 57 to 61 (GKTQT), 75 to 78 (DVPG), 142 to 145 (TKVD), and 174 to 176 (FSA). Mg(2+) is bound by residues Ser-37 and Thr-59.

The protein belongs to the TRAFAC class TrmE-Era-EngA-EngB-Septin-like GTPase superfamily. EngB GTPase family. Requires Mg(2+) as cofactor.

Functionally, necessary for normal cell division and for the maintenance of normal septation. This chain is Probable GTP-binding protein EngB, found in Limosilactobacillus fermentum (strain NBRC 3956 / LMG 18251) (Lactobacillus fermentum).